The primary structure comprises 289 residues: Nucleotide-binding protein Franean1_2060 (289 aa).

13-20 (GLSGAGRS) serves as a coordination point for ATP. GTP is bound at residue 64 to 67 (DVRG).

The protein belongs to the RapZ-like family.

Its function is as follows. Displays ATPase and GTPase activities. The sequence is that of Nucleotide-binding protein Franean1_2060 from Parafrankia sp. (strain EAN1pec).